The following is a 327-amino-acid chain: UPF0665 family protein C23C4.06c (327 aa).

The protein belongs to the UPF0665 family.

Its subcellular location is the cytoplasm. The protein resides in the nucleus. The sequence is that of UPF0665 family protein C23C4.06c from Schizosaccharomyces pombe (strain 972 / ATCC 24843) (Fission yeast).